We begin with the raw amino-acid sequence, 589 residues long: Type I restriction enzyme EcoAI specificity subunit (589 aa).

It belongs to the type-I restriction system S methylase family. The type I restriction/modification system is composed of three polypeptides R, M and S. The restriction enzyme has stoichiometry R(2)M(2)S(1) while the methyltransferase is M(2)S(1).

In terms of biological role, the specificity (S) subunit of a type I restriction enzyme; this subunit dictates DNA sequence specificity. The M and S subunits together form a methyltransferase (MTase) that methylates A-2 on the top strand and A-3 on the bottom strand of the sequence 5'-GAGN(7)GTCA-3'. In the presence of the R subunit the complex can also act as an endonuclease, binding to the same target sequence but cutting the DNA some distance from this site. Whether the DNA is cut or modified depends on the methylation state of the target sequence. When the target site is unmodified, the DNA is cut. When the target site is hemimethylated, the complex acts as a maintenance MTase modifying the DNA so that both strands become methylated. After locating a non-methylated recognition site, the enzyme complex serves as a molecular motor that translocates DNA in an ATP-dependent manner until a collision occurs that triggers cleavage. The protein is Type I restriction enzyme EcoAI specificity subunit of Escherichia coli.